The chain runs to 77 residues: DNA-directed RNA polymerase subunit epsilon (77 aa).

This sequence belongs to the RNA polymerase subunit epsilon family. In terms of assembly, RNAP is composed of a core of 2 alpha, a beta and a beta' subunit. The core is associated with a delta subunit, and at least one of epsilon or omega. When a sigma factor is associated with the core the holoenzyme is formed, which can initiate transcription.

It carries out the reaction RNA(n) + a ribonucleoside 5'-triphosphate = RNA(n+1) + diphosphate. In terms of biological role, a non-essential component of RNA polymerase (RNAP). The sequence is that of DNA-directed RNA polymerase subunit epsilon from Streptococcus pneumoniae (strain P1031).